The following is a 126-amino-acid chain: Protein Wnt-7(II) (126 aa).

Ser-1 carries O-palmitoleoyl serine; by PORCN lipidation. Cys-92 and Cys-107 are joined by a disulfide. N-linked (GlcNAc...) asparagine glycosylation occurs at Asn-93.

This sequence belongs to the Wnt family. Palmitoleoylation is required for efficient binding to frizzled receptors. Depalmitoleoylation leads to Wnt signaling pathway inhibition.

The protein localises to the secreted. It localises to the extracellular space. The protein resides in the extracellular matrix. In terms of biological role, ligand for members of the frizzled family of seven transmembrane receptors. Probable developmental protein. May be a signaling molecule which affects the development of discrete regions of tissues. Is likely to signal over only few cell diameters. This is Protein Wnt-7(II) (WNT-7(II)) from Eptatretus stoutii (Pacific hagfish).